The chain runs to 691 residues: Gex-3-interacting protein 13 (691 aa).

Disordered stretches follow at residues 18-97 (TASL…SAHL) and 171-195 (PASP…KRQR). Positions 31–46 (SSFTTTSESTSPPYSS) are enriched in low complexity. Residues 47-57 (SEHHSPTDQRT) show a composition bias toward basic and acidic residues. Residues 58–79 (ETPTSDSGNASFSPENVATSFE) show a composition bias toward polar residues. A compositionally biased stretch (low complexity) spans 171–183 (PASPCTTAASAPS). BED-type zinc fingers lie at residues 194-242 (QRRN…YEKV) and 424-473 (LRRH…YEKV). Zn(2+) contacts are provided by Cys212, Cys215, His230, His235, Cys443, Cys446, His461, and His466.

As to quaternary structure, interacts with gex-3.

In Caenorhabditis elegans, this protein is Gex-3-interacting protein 13 (gei-13).